Consider the following 134-residue polypeptide: Small ribosomal subunit protein uS9 (134 aa).

A disordered region spans residues 109–134; that stretch reads KGDPRRKEPKKFGGRGARARRQKSYR. Positions 115–134 are enriched in basic residues; it reads KEPKKFGGRGARARRQKSYR.

This sequence belongs to the universal ribosomal protein uS9 family.

The sequence is that of Small ribosomal subunit protein uS9 from Methanopyrus kandleri (strain AV19 / DSM 6324 / JCM 9639 / NBRC 100938).